The following is a 229-amino-acid chain: DNA repair protein RecO (229 aa).

It belongs to the RecO family.

In terms of biological role, involved in DNA repair and RecF pathway recombination. The protein is DNA repair protein RecO of Legionella pneumophila subsp. pneumophila (strain Philadelphia 1 / ATCC 33152 / DSM 7513).